Here is a 220-residue protein sequence, read N- to C-terminus: Large ribosomal subunit protein uL3 (220 aa).

A disordered region spans residues 126–158 (GFQGAIKRHGQSRGPMSHGSRYHRRPGSMGMAS).

Belongs to the universal ribosomal protein uL3 family. As to quaternary structure, part of the 50S ribosomal subunit. Forms a cluster with proteins L14 and L19.

In terms of biological role, one of the primary rRNA binding proteins, it binds directly near the 3'-end of the 23S rRNA, where it nucleates assembly of the 50S subunit. The chain is Large ribosomal subunit protein uL3 from Macrococcus caseolyticus (strain JCSC5402) (Macrococcoides caseolyticum).